The sequence spans 138 residues: Large ribosomal subunit protein uL16 (138 aa).

Residues 1-17 are compositionally biased toward basic residues; sequence MLIPRKVKHRKQHHPRQ. Residues 1 to 22 form a disordered region; the sequence is MLIPRKVKHRKQHHPRQRGIAS.

This sequence belongs to the universal ribosomal protein uL16 family. In terms of assembly, part of the 50S ribosomal subunit.

In terms of biological role, binds 23S rRNA and is also seen to make contacts with the A and possibly P site tRNAs. This chain is Large ribosomal subunit protein uL16, found in Mycobacterium avium (strain 104).